Here is a 161-residue protein sequence, read N- to C-terminus: Phosphopantetheine adenylyltransferase (161 aa).

S9 lines the substrate pocket. ATP-binding positions include S9–F10 and H17. The substrate site is built by K41, L73, and K87. ATP is bound by residues G88–R90, E98, and F122–S128.

The protein belongs to the bacterial CoaD family. In terms of assembly, homohexamer. Mg(2+) serves as cofactor.

Its subcellular location is the cytoplasm. It catalyses the reaction (R)-4'-phosphopantetheine + ATP + H(+) = 3'-dephospho-CoA + diphosphate. It participates in cofactor biosynthesis; coenzyme A biosynthesis; CoA from (R)-pantothenate: step 4/5. Reversibly transfers an adenylyl group from ATP to 4'-phosphopantetheine, yielding dephospho-CoA (dPCoA) and pyrophosphate. This Nocardia farcinica (strain IFM 10152) protein is Phosphopantetheine adenylyltransferase.